The primary structure comprises 446 residues: Ribulose bisphosphate carboxylase large chain (446 aa).

2 residues coordinate substrate: Asn-89 and Thr-139. The active-site Proton acceptor is the Lys-141. Residue Lys-143 participates in substrate binding. Lys-167, Asp-169, and Glu-170 together coordinate Mg(2+). Lys-167 bears the N6-carboxylysine mark. Residue His-260 is the Proton acceptor of the active site. Positions 261, 293, and 345 each coordinate substrate.

This sequence belongs to the RuBisCO large chain family. Type I subfamily. Heterohexadecamer of 8 large chains and 8 small chains; disulfide-linked. The disulfide link is formed within the large subunit homodimers. It depends on Mg(2+) as a cofactor. The disulfide bond which can form in the large chain dimeric partners within the hexadecamer appears to be associated with oxidative stress and protein turnover.

It localises to the plastid. The protein resides in the chloroplast. It catalyses the reaction 2 (2R)-3-phosphoglycerate + 2 H(+) = D-ribulose 1,5-bisphosphate + CO2 + H2O. The catalysed reaction is D-ribulose 1,5-bisphosphate + O2 = 2-phosphoglycolate + (2R)-3-phosphoglycerate + 2 H(+). In terms of biological role, ruBisCO catalyzes two reactions: the carboxylation of D-ribulose 1,5-bisphosphate, the primary event in carbon dioxide fixation, as well as the oxidative fragmentation of the pentose substrate in the photorespiration process. Both reactions occur simultaneously and in competition at the same active site. In Exacum affine (Persian violet), this protein is Ribulose bisphosphate carboxylase large chain.